The primary structure comprises 127 residues: MSIPDDLRYTKDHEWIKLLEDGSAALVGITDFAQSELGDIVFVELKPAGTKLKAHEVFGTVEAVKTVADLFAPVAGEIMEVNGSLDAAEVVNQDPYGEGWLVKIRIDDPASLAELLDAAAYRELIGE.

A Lipoyl-binding domain is found at 24-105 (AALVGITDFA…YGEGWLVKIR (82 aa)). The residue at position 65 (Lys65) is an N6-lipoyllysine.

This sequence belongs to the GcvH family. The glycine cleavage system is composed of four proteins: P, T, L and H. (R)-lipoate is required as a cofactor.

In terms of biological role, the glycine cleavage system catalyzes the degradation of glycine. The H protein shuttles the methylamine group of glycine from the P protein to the T protein. The chain is Glycine cleavage system H protein from Chlorobium limicola (strain DSM 245 / NBRC 103803 / 6330).